We begin with the raw amino-acid sequence, 378 residues long: MSEKSDSNDDKSRTRSVVYVYSPEYIQTCDSLSKVPNRASMVHSLIEAYGLLKYMRVVKPHVASIEEMAVFHTDSYLQHLHKISQDGDNDDPQSADFGLGYDCPVVEGIFDYAAAVGGATLTAAQNLLDGKCDVAINWAGGWHHAKKDEASGSCYVNDAVLGILKLREKYDRVLYVDVDLHHGDGVEDAFSFTSKVMTVSLHKFSPGFFPGTGDVTDTGLGKGRWYAVNVPFEDGVRDDRYCQTFTSVMQEVKALFNPEAVVMQLGADTMAGDPMCSFNMTPVGVAKCLTYILGWELPTLLLGGGGYNLANTARCWTYLTGTVLGQTLSSEIPDHEFFTEYGPDYSLEISPSCRPDRNESQHLERVISTIKGNLKNVV.

Residues 15 to 325 (RSVVYVYSPE…WTYLTGTVLG (311 aa)) are histone deacetylase. Aspartate 102 contacts substrate. Histidine 144 serves as the catalytic Proton acceptor. Glycine 152 provides a ligand contact to substrate. Residues aspartate 179, histidine 181, and aspartate 268 each coordinate a divalent metal cation. Tyrosine 307 lines the substrate pocket.

It belongs to the histone deacetylase family. HD type 1 subfamily. It depends on a divalent metal cation as a cofactor.

The protein localises to the nucleus. It localises to the chromosome. The protein resides in the cytoplasm. The enzyme catalyses N(6)-acetyl-L-lysyl-[histone] + H2O = L-lysyl-[histone] + acetate. It carries out the reaction N(6)-acetyl-L-lysyl-[protein] + H2O = L-lysyl-[protein] + acetate. It catalyses the reaction N(6)-(2E)-butenoyl-L-lysyl-[protein] + H2O = (2E)-2-butenoate + L-lysyl-[protein]. Its activity is regulated as follows. Its activity is inhibited by trichostatin A (TSA) and butyrate, 2 well known histone deacetylase inhibitors. Its function is as follows. Histone deacetylase that catalyzes the deacetylation of lysine residues on the N-terminal part of the core histones (H2A, H2B, H3 and H4). Histone deacetylation gives a tag for epigenetic repression and plays an important role in transcriptional regulation, cell cycle progression and developmental events. Histone deacetylases act via the formation of large multiprotein complexes. Also involved in the deacetylation of non-histone proteins. In addition to protein deacetylase activity, also has protein-lysine deacylase activity: acts as a protein decrotonylase by mediating decrotonylation ((2E)-butenoyl) of histones. This Danio rerio (Zebrafish) protein is Histone deacetylase 8 (hdac8).